The sequence spans 339 residues: Putative clathrin assembly protein At1g14686 (339 aa).

An ENTH domain is found at 16-148; that stretch reads SLIAADDILT…ILFHDGNRHR (133 aa). Residues 283–307 form a disordered region; sequence ESSEESAERTEIAEEEEEEEEEIET. Residues 295 to 305 show a composition bias toward acidic residues; it reads AEEEEEEEEEI.

The protein localises to the membrane. It is found in the clathrin-coated pit. It localises to the golgi apparatus. Its subcellular location is the cytoplasmic vesicle. The protein resides in the clathrin-coated vesicle. The polypeptide is Putative clathrin assembly protein At1g14686 (Arabidopsis thaliana (Mouse-ear cress)).